Consider the following 231-residue polypeptide: 6-phosphogluconolactonase (231 aa).

Belongs to the glucosamine/galactosamine-6-phosphate isomerase family. 6-phosphogluconolactonase subfamily.

It carries out the reaction 6-phospho-D-glucono-1,5-lactone + H2O = 6-phospho-D-gluconate + H(+). It participates in carbohydrate degradation; pentose phosphate pathway; D-ribulose 5-phosphate from D-glucose 6-phosphate (oxidative stage): step 2/3. Hydrolysis of 6-phosphogluconolactone to 6-phosphogluconate. The protein is 6-phosphogluconolactonase (pgl) of Neisseria meningitidis serogroup A / serotype 4A (strain DSM 15465 / Z2491).